The sequence spans 347 residues: NADH-ubiquinone oxidoreductase chain 2 (347 aa).

10 consecutive transmembrane segments (helical) span residues 13–33 (IFAGTLITALSSHWFFTWVGL), 56–76 (AIKYFLTQATASMILLMAILF), 96–116 (LMIMMAMAMKLGMAPFHFWVP), 123–143 (PLTSGLLLLTWQKLAPISIMY), 149–169 (LNVSLLLTLSILSIMAGSWGG), 178–198 (ILAYSSITHMGWMMAVLPYNP), 201–221 (TILNLTIYIILTTTAFLLLNL), 247–267 (TLLSLGGLPPLTGFLPKWAII), 274–294 (NSLIIPTIMATITLLNLYFYL), and 326–346 (LPTLIALTTLLLPISPFMLMI).

Belongs to the complex I subunit 2 family. Core subunit of respiratory chain NADH dehydrogenase (Complex I) which is composed of 45 different subunits. Interacts with TMEM242.

It is found in the mitochondrion inner membrane. It catalyses the reaction a ubiquinone + NADH + 5 H(+)(in) = a ubiquinol + NAD(+) + 4 H(+)(out). Functionally, core subunit of the mitochondrial membrane respiratory chain NADH dehydrogenase (Complex I) which catalyzes electron transfer from NADH through the respiratory chain, using ubiquinone as an electron acceptor. Essential for the catalytic activity and assembly of complex I. In Homo sapiens (Human), this protein is NADH-ubiquinone oxidoreductase chain 2.